The following is a 643-amino-acid chain: Very long-chain fatty acid transport protein (643 aa).

Topologically, residues 1 to 15 are cytoplasmic; the sequence is MACMHQAQLYNDLEE. Residues 16-36 traverse the membrane as a helical segment; the sequence is LLTGPSVPIVAGAAGAAALTA. Topologically, residues 37 to 138 are extracellular; sequence YINAKYHIAH…AIDGGNSAEH (102 aa). A helical transmembrane segment spans residues 139-159; sequence LMLWLALDAIGAATSFLNWNL. Over 160-249 the chain is Cytoplasmic; sequence TGAGLIHCIK…TGLPKGVFIS (90 aa). 235–246 lines the ATP pocket; that stretch reads YTSGTTGLPKGV. Residues 250–318 lie within the membrane without spanning it; that stretch reads TGRELRTDWS…FWPEVVASEA (69 aa). At 319-643 the chain is on the cytoplasmic side; sequence NIIQYVGELG…QGIVDKRIRL (325 aa). An FACS motif is present at residues 477-525; the sequence is DLWFKSGDMLRQDAEGRVYFVDRLGDTFRWKSENVSTNEVADVMGTFPQ.

It belongs to the ATP-dependent AMP-binding enzyme family.

The protein resides in the lipid droplet. It localises to the cell membrane. Its subcellular location is the peroxisome membrane. It is found in the peroxisome. It carries out the reaction a very long-chain fatty acid + ATP + CoA = a very long-chain fatty acyl-CoA + AMP + diphosphate. Its function is as follows. Acyl-CoA synthetase required for both the import of long chain fatty acids (LCFAs) (C14-C18) and the activation very long chain fatty acids (VLCFAs) (C20-C26) by esterification of the fatty acids into metabolically active CoA-thioesters for subsequent degradation or incorporation into phospholipids. The transport and fatty acyl-CoA synthetase activities are genetically separable and are thus independent activities. Esterifies VLCFAs in the peroxisome matrix. The VLCFAs are actively transported into peroxisomes by a PXA1-PXA2 heterodimeric transporter in the peroxisomal membrane. The chain is Very long-chain fatty acid transport protein (FAT1) from Cochliobolus heterostrophus (Southern corn leaf blight fungus).